We begin with the raw amino-acid sequence, 128 residues long: Holo-[acyl-carrier-protein] synthase (128 aa).

Asp7 and Glu55 together coordinate Mg(2+).

The protein belongs to the P-Pant transferase superfamily. AcpS family. Mg(2+) is required as a cofactor.

It is found in the cytoplasm. It carries out the reaction apo-[ACP] + CoA = holo-[ACP] + adenosine 3',5'-bisphosphate + H(+). Functionally, transfers the 4'-phosphopantetheine moiety from coenzyme A to a Ser of acyl-carrier-protein. This is Holo-[acyl-carrier-protein] synthase from Moorella thermoacetica (strain ATCC 39073 / JCM 9320).